The sequence spans 128 residues: Translation initiation factor 5A (128 aa).

Lys35 is modified (hypusine).

Belongs to the eIF-5A family.

Its subcellular location is the cytoplasm. In terms of biological role, functions by promoting the formation of the first peptide bond. The sequence is that of Translation initiation factor 5A (eif5a) from Archaeoglobus fulgidus (strain ATCC 49558 / DSM 4304 / JCM 9628 / NBRC 100126 / VC-16).